A 397-amino-acid polypeptide reads, in one-letter code: CCA-adding enzyme (397 aa).

The ATP site is built by glycine 26 and arginine 29. Glycine 26 and arginine 29 together coordinate CTP. Positions 39 and 41 each coordinate Mg(2+). Residues arginine 110, aspartate 153, arginine 156, arginine 159, and arginine 162 each coordinate ATP. 5 residues coordinate CTP: arginine 110, aspartate 153, arginine 156, arginine 159, and arginine 162.

It belongs to the tRNA nucleotidyltransferase/poly(A) polymerase family. Bacterial CCA-adding enzyme type 3 subfamily. Homodimer. Mg(2+) serves as cofactor.

The enzyme catalyses a tRNA precursor + 2 CTP + ATP = a tRNA with a 3' CCA end + 3 diphosphate. The catalysed reaction is a tRNA with a 3' CCA end + 2 CTP + ATP = a tRNA with a 3' CCACCA end + 3 diphosphate. Its function is as follows. Catalyzes the addition and repair of the essential 3'-terminal CCA sequence in tRNAs without using a nucleic acid template. Adds these three nucleotides in the order of C, C, and A to the tRNA nucleotide-73, using CTP and ATP as substrates and producing inorganic pyrophosphate. tRNA 3'-terminal CCA addition is required both for tRNA processing and repair. Also involved in tRNA surveillance by mediating tandem CCA addition to generate a CCACCA at the 3' terminus of unstable tRNAs. While stable tRNAs receive only 3'-terminal CCA, unstable tRNAs are marked with CCACCA and rapidly degraded. This is CCA-adding enzyme from Bacillus cereus (strain 03BB102).